Consider the following 886-residue polypeptide: DNA mismatch repair protein MutS (886 aa).

641–648 (GPNMAGKS) lines the ATP pocket.

It belongs to the DNA mismatch repair MutS family.

Its function is as follows. This protein is involved in the repair of mismatches in DNA. It is possible that it carries out the mismatch recognition step. This protein has a weak ATPase activity. The polypeptide is DNA mismatch repair protein MutS (Rickettsia felis (strain ATCC VR-1525 / URRWXCal2) (Rickettsia azadi)).